The following is a 365-amino-acid chain: UDP-galactose transporter homolog 1 (365 aa).

The next 2 membrane-spanning stretches (helical) occupy residues 42-62 and 80-100; these read IIDLIICVSGIYASFLTWAVL and ASLVINTVQSFLAAAVGYAYL. Residue N115 is glycosylated (N-linked (GlcNAc...) asparagine). 2 helical membrane passes run 182–202 and 206–226; these read YAVVVLVTIGVSMFTIFHAAP and SGAGSEHQLYGLGLLGISMLL. A glycan (N-linked (GlcNAc...) asparagine) is linked at N231. Transmembrane regions (helical) follow at residues 249-269, 289-309, 315-335, and 339-359; these read VMCGLNLLTGVFTTVSLLTFS, DIVLFGLCGAVGQVFIFQTLE, VLVTVNVTRKMFSMLLSVVWF, and LTLGQWAGVAAVFGGIGFEAW.

The protein belongs to the nucleotide-sugar transporter family. SLC35B subfamily.

It localises to the endoplasmic reticulum membrane. Its function is as follows. May be involved in specific transport of UDP-Gal from the cytosol to the Golgi lumen. Involved in the maintenance of optimal conditions for the folding of secretory pathway proteins in the endoplasmic reticulum. The polypeptide is UDP-galactose transporter homolog 1 (HUT1) (Yarrowia lipolytica (strain CLIB 122 / E 150) (Yeast)).